A 252-amino-acid chain; its full sequence is Ribonuclease HII (252 aa).

Residues 68 to 252 (EYVAGLDEVG…FGPVRDRLRS (185 aa)) form the RNase H type-2 domain. Residues Asp-74, Glu-75, and Asp-165 each contribute to the a divalent metal cation site.

Belongs to the RNase HII family. Mn(2+) serves as cofactor. The cofactor is Mg(2+).

The protein resides in the cytoplasm. The catalysed reaction is Endonucleolytic cleavage to 5'-phosphomonoester.. Endonuclease that specifically degrades the RNA of RNA-DNA hybrids. In Lacticaseibacillus paracasei (strain ATCC 334 / BCRC 17002 / CCUG 31169 / CIP 107868 / KCTC 3260 / NRRL B-441) (Lactobacillus paracasei), this protein is Ribonuclease HII.